Consider the following 225-residue polypeptide: Suppressor of cytokine signaling 3 (225 aa).

The tract at residues 22–33 is kinase inhibitory region (KIR); it reads LKTFSSKSEYQL. An extended SH2 subdomain (ESS) region spans residues 34-45; that stretch reads VVNAVRKLQESG. In terms of domain architecture, SH2 spans 46 to 142; that stretch reads FYWSAVTGGE…APSFPSPPTE (97 aa). Over residues 131-142 the composition is skewed to pro residues; it reads PGAPSFPSPPTE. The segment at 131 to 162 is disordered; the sequence is PGAPSFPSPPTEPSSEVPEQPSAQPLPGSPPR. The span at 143 to 155 shows a compositional bias: low complexity; the sequence is PSSEVPEQPSAQP. In terms of domain architecture, SOCS box spans 177–224; it reads VLSRPLSSNVATLQHLCRKTVNGHLDSYEKVTQLPGPIREFLDQYDAP.

In terms of assembly, interacts with multiple activated proteins of the tyrosine kinase signaling pathway including IGF1 receptor, insulin receptor and JAK2. Binding to JAK2 is mediated through the KIR and SH2 domains to a phosphorylated tyrosine residue within the JAK2 JH1 domain. Binds specific activated tyrosine residues of the leptin, EPO, IL12, GSCF and gp130 receptors. Interaction with CSNK1E stabilizes SOCS3 protein. Component of the probable ECS(SOCS3) E3 ubiquitin-protein ligase complex which contains CUL5, RNF7/RBX2, Elongin BC complex and SOCS3. Interacts with CUL5, RNF7, ELOB and ELOC. Interacts with CUL2. Interacts with FGFR3. Interacts with INSR. Interacts with BCL10; this interaction may interfere with BCL10-binding with PELI2. Interacts with NOD2 (via CARD domain); the interaction promotes NOD2 degradation. In terms of processing, phosphorylated on tyrosine residues after stimulation by the cytokines, IL-2, EPO or IGF1. In terms of tissue distribution, widely expressed with high expression in heart, placenta, skeletal muscle, peripheral blood leukocytes, fetal and adult lung, and fetal liver and kidney. Lower levels in thymus.

The protein operates within protein modification; protein ubiquitination. SOCS family proteins form part of a classical negative feedback system that regulates cytokine signal transduction. SOCS3 is involved in negative regulation of cytokines that signal through the JAK/STAT pathway. Inhibits cytokine signal transduction by binding to tyrosine kinase receptors including IL6ST/gp130, LIF, erythropoietin, insulin, IL12, GCSF and leptin receptors. Binding to JAK2 inhibits its kinase activity and regulates IL6 signaling. Suppresses fetal liver erythropoiesis. Regulates onset and maintenance of allergic responses mediated by T-helper type 2 cells. Probable substrate recognition component of a SCF-like ECS (Elongin BC-CUL2/5-SOCS-box protein) E3 ubiquitin-protein ligase complex which mediates the ubiquitination and subsequent proteasomal degradation of target proteins. The polypeptide is Suppressor of cytokine signaling 3 (Homo sapiens (Human)).